Consider the following 207-residue polypeptide: Large ribosomal subunit protein uL4 (207 aa).

A disordered region spans residues 52 to 77; that stretch reads RGWADVSGGGRKPWRQKGTGRARAGS.

It belongs to the universal ribosomal protein uL4 family. Part of the 50S ribosomal subunit.

Functionally, one of the primary rRNA binding proteins, this protein initially binds near the 5'-end of the 23S rRNA. It is important during the early stages of 50S assembly. It makes multiple contacts with different domains of the 23S rRNA in the assembled 50S subunit and ribosome. Forms part of the polypeptide exit tunnel. The chain is Large ribosomal subunit protein uL4 from Moorella thermoacetica (strain ATCC 39073 / JCM 9320).